A 355-amino-acid chain; its full sequence is Heterogeneous nuclear ribonucleoprotein D0 (355 aa).

Residues 1–91 (MSEEQFGGDG…SSPRHTEAAA (91 aa)) are disordered. N-acetylserine is present on S2. Positions 11–43 (AAAAATAAVGGSAGEQEGAMVAAAAQGPAAAAG) are enriched in low complexity. The segment covering 44–58 (SGSGGGGSAAGGTEG) has biased composition (gly residues). Residues 64–73 (EGAKIDASKN) are compositionally biased toward basic and acidic residues. S71 is modified (phosphoserine). K72 is covalently cross-linked (Glycyl lysine isopeptide (Lys-Gly) (interchain with G-Cter in SUMO2)). Phosphoserine is present on residues S80, S82, and S83. RRM domains follow at residues 97 to 179 (WKMF…KTKE) and 182 to 261 (KKIF…MSKE). K119 carries the post-translational modification N6-methyllysine. Position 127 is a phosphothreonine (T127). K129 participates in a covalent cross-link: Glycyl lysine isopeptide (Lys-Gly) (interchain with G-Cter in SUMO2). K165 carries the N6-acetyllysine modification. S190 is modified (phosphoserine). T193 carries the post-translational modification Phosphothreonine. K197 participates in a covalent cross-link: Glycyl lysine isopeptide (Lys-Gly) (interchain with G-Cter in SUMO2). Residues K243 and K251 each carry the N6-acetyllysine modification. E261 and Y263 each carry omega-N-methylarginine. The residue at position 271 (S271) is a Phosphoserine. Omega-N-methylarginine occurs at positions 272, 278, 280, and 282. Residue R345 is modified to Asymmetric dimethylarginine; alternate. The residue at position 345 (R345) is a Dimethylated arginine; alternate. Position 345 is an omega-N-methylarginine; alternate (R345).

In terms of assembly, identified in a IGF2BP1-dependent mRNP granule complex containing untranslated mRNAs. Part of a complex associated with the FOS mCRD domain and consisting of PABPC1, PAIP1, CSDE1/UNR and SYNCRIP. Interacts with IGF2BP2. Interacts with GTPBP1. Interacts with EIF4G1; the interaction requires RNA. Interacts with EIF3B and RPS3. Post-translationally, methylated by PRMT1, in an insulin-dependent manner. The PRMT1-mediated methylation regulates its phosphorylation. Arg-345 is dimethylated, probably to asymmetric dimethylarginine.

It localises to the nucleus. Its subcellular location is the cytoplasm. In terms of biological role, binds with high affinity to RNA molecules that contain AU-rich elements (AREs) found within the 3'-UTR of many proto-oncogenes and cytokine mRNAs. Also binds to double- and single-stranded DNA sequences in a specific manner and functions a transcription factor. Each of the RNA-binding domains specifically can bind solely to a single-stranded non-monotonous 5'-UUAG-3' sequence and also weaker to the single-stranded 5'-TTAGGG-3' telomeric DNA repeat. Binds RNA oligonucleotides with 5'-UUAGGG-3' repeats more tightly than the telomeric single-stranded DNA 5'-TTAGGG-3' repeats. Binding of RRM1 to DNA inhibits the formation of DNA quadruplex structure which may play a role in telomere elongation. May be involved in translationally coupled mRNA turnover. Implicated with other RNA-binding proteins in the cytoplasmic deadenylation/translational and decay interplay of the FOS mRNA mediated by the major coding-region determinant of instability (mCRD) domain. May play a role in the regulation of the rhythmic expression of circadian clock core genes. Directly binds to the 3'UTR of CRY1 mRNA and induces CRY1 rhythmic translation. May also be involved in the regulation of PER2 translation. The polypeptide is Heterogeneous nuclear ribonucleoprotein D0 (Hnrnpd) (Mus musculus (Mouse)).